The primary structure comprises 149 residues: Large ribosomal subunit protein uL15 (149 aa).

Residues 30–63 (GLGKTAGRGHKGSFARKGGGKIKPGFEGGQTPMQ) are disordered. A compositionally biased stretch (basic residues) spans 36–49 (GRGHKGSFARKGGG).

This sequence belongs to the universal ribosomal protein uL15 family. In terms of assembly, part of the 50S ribosomal subunit.

Its function is as follows. Binds to the 23S rRNA. In Xylella fastidiosa (strain 9a5c), this protein is Large ribosomal subunit protein uL15.